The chain runs to 223 residues: Deoxyribose-phosphate aldolase (223 aa).

Aspartate 91 (proton donor/acceptor) is an active-site residue. Lysine 154 serves as the catalytic Schiff-base intermediate with acetaldehyde. Residue lysine 183 is the Proton donor/acceptor of the active site.

The protein belongs to the DeoC/FbaB aldolase family. DeoC type 1 subfamily.

The protein resides in the cytoplasm. The catalysed reaction is 2-deoxy-D-ribose 5-phosphate = D-glyceraldehyde 3-phosphate + acetaldehyde. It functions in the pathway carbohydrate degradation; 2-deoxy-D-ribose 1-phosphate degradation; D-glyceraldehyde 3-phosphate and acetaldehyde from 2-deoxy-alpha-D-ribose 1-phosphate: step 2/2. Catalyzes a reversible aldol reaction between acetaldehyde and D-glyceraldehyde 3-phosphate to generate 2-deoxy-D-ribose 5-phosphate. The polypeptide is Deoxyribose-phosphate aldolase (Geobacillus sp. (strain WCH70)).